We begin with the raw amino-acid sequence, 134 residues long: MGLIVYYSSRSENTHRFVARLGLRAARIPASGADAFHIREPFVLVVPTYSSGDGKGAVPKQVIRCLNDAENRKHIRGVIAAGNSNFGETYGLAGDVISRKCQVPYLYRFELMGTEEDVANVKHGMERFWTREQL.

This sequence belongs to the NrdI family.

Its function is as follows. Probably involved in ribonucleotide reductase function. The chain is Protein NrdI from Rhizobium etli (strain CIAT 652).